The sequence spans 96 residues: MQITDVRVRKIAAEGKMKAIVSVTFDNEFVVHDIKVIEGQNGLFIAMPSRKTPDGEFKDIAHPINTQTREKIQKAILGEYEKVKNEETVTEEKVEE.

It belongs to the SpoVG family.

Functionally, could be involved in septation. In Clostridium kluyveri (strain ATCC 8527 / DSM 555 / NBRC 12016 / NCIMB 10680 / K1), this protein is Putative septation protein SpoVG.